Here is a 336-residue protein sequence, read N- to C-terminus: Zinc finger protein GFI1 homolog pag-3 (336 aa).

C2H2-type zinc fingers lie at residues 126–148 (FHCQ…QQVH), 154–176 (FECK…LLIH), 182–204 (YPCE…TYIH), 210–232 (HKCT…TRKH), and 238–260 (FACD…RESH). The segment at 253 to 290 (RRRHRESHHPGHPEECVSASQISSDLSPKGYMTPPTSN) is disordered.

In terms of assembly, may interact with transcription factor unc-3. In terms of tissue distribution, expressed in the BDU neurons, the touch neurons, the VA, VB and VC motor neurons, two AVF interneurons and unidentified neurons of the retrovesicular ganglion (at protein level).

The protein localises to the nucleus. The protein resides in the cell projection. Its subcellular location is the axon. It is found in the perikaryon. Its function is as follows. Transcription factor. Plays a role in the determination of neuroblast cell fate and neuronal differentiation. Negatively modulates expression of several components of dense-core vesicles (DCVs), thereby, in a DCV membrane protein ida-1-dependent manner, regulating neurosecretion. Negatively modulates the transcription of its own gene, the mechanosensory gene mec-3, and also other touch neuron-specific genes in the BDU neurons; required for coordinated movement. Required to determine the identity of BDU sensory neurons in concert with transcription factor unc-86, regulating expression of a number of genes, including transcription factors ceh-14 and ahr-1, neuropeptides flp-10, nlp-1 and nlp-15, and tyramine receptor-encoding ser-2. Acts in concert with non-canonical WNT signaling to negatively modulate transcription of mec-3 gene in BDU neurons. May act in concert with transcription factor unc-3 in motor neuron fate determination. May play a role programmed cell death. This chain is Zinc finger protein GFI1 homolog pag-3, found in Caenorhabditis elegans.